The chain runs to 246 residues: Outer membrane protein assembly factor BamD (246 aa).

A signal peptide spans 1 to 22 (MKKKNSIIFVFMILFFNSTVQS).

This sequence belongs to the BamD family. As to quaternary structure, part of the Bam complex.

It localises to the cell outer membrane. Its function is as follows. Part of the outer membrane protein assembly complex, which is involved in assembly and insertion of beta-barrel proteins into the outer membrane. The polypeptide is Outer membrane protein assembly factor BamD (Buchnera aphidicola subsp. Acyrthosiphon pisum (strain APS) (Acyrthosiphon pisum symbiotic bacterium)).